Consider the following 297-residue polypeptide: Glutamyl-Q tRNA(Asp) synthetase (297 aa).

L-glutamate contacts are provided by residues 7-11 (RFAPS) and Glu43. The short motif at 10–20 (PSPTGPLHFGS) is the 'HIGH' region element. Residues Cys99, Cys101, Tyr122, and Cys126 each coordinate Zn(2+). Tyr182 and Arg200 together coordinate L-glutamate. Residues 238 to 242 (KLSKQ) carry the 'KMSKS' region motif. Lys241 is a binding site for ATP.

Belongs to the class-I aminoacyl-tRNA synthetase family. GluQ subfamily. Zn(2+) serves as cofactor.

Catalyzes the tRNA-independent activation of glutamate in presence of ATP and the subsequent transfer of glutamate onto a tRNA(Asp). Glutamate is transferred on the 2-amino-5-(4,5-dihydroxy-2-cyclopenten-1-yl) moiety of the queuosine in the wobble position of the QUC anticodon. The polypeptide is Glutamyl-Q tRNA(Asp) synthetase (Burkholderia pseudomallei (strain K96243)).